The following is a 333-amino-acid chain: Fructose-1,6-bisphosphatase class 1 1 (333 aa).

The Mg(2+) site is built by glutamate 81, aspartate 100, leucine 102, and aspartate 103. Substrate contacts are provided by residues 103-106 (DGSS) and asparagine 191. A Mg(2+)-binding site is contributed by glutamate 263.

Belongs to the FBPase class 1 family. Homotetramer. The cofactor is Mg(2+).

It localises to the cytoplasm. The catalysed reaction is beta-D-fructose 1,6-bisphosphate + H2O = beta-D-fructose 6-phosphate + phosphate. It functions in the pathway carbohydrate biosynthesis; Calvin cycle. In Cereibacter sphaeroides (strain ATCC 17023 / DSM 158 / JCM 6121 / CCUG 31486 / LMG 2827 / NBRC 12203 / NCIMB 8253 / ATH 2.4.1.) (Rhodobacter sphaeroides), this protein is Fructose-1,6-bisphosphatase class 1 1.